A 137-amino-acid chain; its full sequence is MLQPKRTKFRKMQKGRIRGEAKGGSDLTFGTYGLKALQPERVTARQIEAARRAMTRHMKRQGRVWIRIFPDTPVTSKPVEVRMGKGKGSVDFWACKVKPGRVMFEIDGVSEPIAREALRLAAMKLPVKTRTVVREDW.

A compositionally biased stretch (basic residues) spans 1 to 16 (MLQPKRTKFRKMQKGR). The disordered stretch occupies residues 1-22 (MLQPKRTKFRKMQKGRIRGEAK).

The protein belongs to the universal ribosomal protein uL16 family. In terms of assembly, part of the 50S ribosomal subunit.

Binds 23S rRNA and is also seen to make contacts with the A and possibly P site tRNAs. In Jannaschia sp. (strain CCS1), this protein is Large ribosomal subunit protein uL16.